Here is a 1285-residue protein sequence, read N- to C-terminus: ABC-type transporter fsqE (1285 aa).

Positions 54–343 (VSSICAVLAG…IAPSAQALLS (290 aa)) constitute an ABC transmembrane type-1 1 domain. The next 6 helical transmembrane spans lie at 57 to 77 (ICAVLAGALNPLVPVIYGLLV), 102 to 122 (LYYVYLSIGLFAFTYVATVGF), 176 to 196 (LAVMLTAIATFCAAFVVAFIM), 203 to 223 (IISPFFVIMIVTETLGGAYMV), 281 to 301 (VAGMIAWMNAMPNLIYALAFW), and 312 to 332 (MSVAEVSATTLAVTIGSFAII). The region spanning 380–622 (LDRVGLIYPS…NGAYAALVQK (243 aa)) is the ABC transporter 1 domain. 413–420 (GSSGSGKS) is a binding site for ATP. An N-linked (GlcNAc...) asparagine glycan is attached at Asn467. The interval 627–654 (DTHDHKAPDGARLSIEDDDDEDSRYGGN) is disordered. 6 consecutive transmembrane segments (helical) span residues 707 to 727 (LFGLANAILAGLTIPVQSVFF), 753 to 773 (GLYVMLTGTTFLFWMGVEIAL), 831 to 851 (GILTFLSTILAGIVLALAIGW), 855 to 875 (LVCTATIPIVVACGWLRLQVL), 931 to 951 (ILLASALYAASASVVYLCAAL), and 968 to 988 (FQVYICFVSLISGSQIAGSIF). The region spanning 713-996 (AILAGLTIPV…IFTYAPDASK (284 aa)) is the ABC transmembrane type-1 2 domain. Asn1037 is a glycosylation site (N-linked (GlcNAc...) asparagine). Positions 1043–1281 (VEFEHVSFTY…RGKYWEMVSM (239 aa)) constitute an ABC transporter 2 domain. 1078-1085 (GQSGSGKS) lines the ATP pocket. N-linked (GlcNAc...) asparagine glycosylation is present at Asn1138.

It belongs to the ABC transporter superfamily. ABCB family. Multidrug resistance exporter (TC 3.A.1.201) subfamily.

Its subcellular location is the membrane. It participates in secondary metabolite biosynthesis. ABC-type transporter; part of the gene cluster that mediates the biosynthesis of the isoquinoline alkaloids fumisoquin A, fumisoquin B and fumisoquin C; as well as small amounts of fumipyrrole as a shunt metabolite. The products of the cluster lead to a brown coloration and are important for growth and conidiation. FsqE possibly plays a role of self-protection. The chain is ABC-type transporter fsqE from Aspergillus fumigatus (strain ATCC MYA-4609 / CBS 101355 / FGSC A1100 / Af293) (Neosartorya fumigata).